The sequence spans 252 residues: dITP/XTP pyrophosphatase (252 aa).

Residue 7-12 (THNEGK) participates in substrate binding. Residue aspartate 74 is the Proton acceptor of the active site. Aspartate 74 contacts Mg(2+). Residues serine 75 and 193 to 196 (FGYD) contribute to the substrate site. Residues 202–229 (DDQPAGRVSTEPDHEGEPLTSAEMTPAE) form a disordered region. Substrate contacts are provided by residues lysine 230 and 235-236 (HR).

Belongs to the HAM1 NTPase family. Homodimer. Requires Mg(2+) as cofactor.

It catalyses the reaction XTP + H2O = XMP + diphosphate + H(+). The enzyme catalyses dITP + H2O = dIMP + diphosphate + H(+). The catalysed reaction is ITP + H2O = IMP + diphosphate + H(+). Functionally, pyrophosphatase that catalyzes the hydrolysis of nucleoside triphosphates to their monophosphate derivatives, with a high preference for the non-canonical purine nucleotides XTP (xanthosine triphosphate), dITP (deoxyinosine triphosphate) and ITP. Seems to function as a house-cleaning enzyme that removes non-canonical purine nucleotides from the nucleotide pool, thus preventing their incorporation into DNA/RNA and avoiding chromosomal lesions. This chain is dITP/XTP pyrophosphatase, found in Bifidobacterium longum (strain NCC 2705).